Here is a 275-residue protein sequence, read N- to C-terminus: Ribosomal RNA small subunit methyltransferase A (275 aa).

Residues asparagine 15, leucine 17, glycine 42, glutamate 63, aspartate 88, and asparagine 111 each coordinate S-adenosyl-L-methionine.

The protein belongs to the class I-like SAM-binding methyltransferase superfamily. rRNA adenine N(6)-methyltransferase family. RsmA subfamily.

The protein resides in the cytoplasm. The enzyme catalyses adenosine(1518)/adenosine(1519) in 16S rRNA + 4 S-adenosyl-L-methionine = N(6)-dimethyladenosine(1518)/N(6)-dimethyladenosine(1519) in 16S rRNA + 4 S-adenosyl-L-homocysteine + 4 H(+). In terms of biological role, specifically dimethylates two adjacent adenosines (A1518 and A1519) in the loop of a conserved hairpin near the 3'-end of 16S rRNA in the 30S particle. May play a critical role in biogenesis of 30S subunits. The polypeptide is Ribosomal RNA small subunit methyltransferase A (Geobacter metallireducens (strain ATCC 53774 / DSM 7210 / GS-15)).